Consider the following 921-residue polypeptide: Protein translocase subunit SecA (921 aa).

ATP-binding positions include Gln-87, 105–109 (GEGKT), and Asp-516. Residues Cys-905, Cys-907, Cys-916, and His-917 each coordinate Zn(2+).

The protein belongs to the SecA family. As to quaternary structure, monomer and homodimer. Part of the essential Sec protein translocation apparatus which comprises SecA, SecYEG and auxiliary proteins SecDF-YajC and YidC. Requires Zn(2+) as cofactor.

It localises to the cell inner membrane. Its subcellular location is the cytoplasm. It catalyses the reaction ATP + H2O + cellular proteinSide 1 = ADP + phosphate + cellular proteinSide 2.. Functionally, part of the Sec protein translocase complex. Interacts with the SecYEG preprotein conducting channel. Has a central role in coupling the hydrolysis of ATP to the transfer of proteins into and across the cell membrane, serving both as a receptor for the preprotein-SecB complex and as an ATP-driven molecular motor driving the stepwise translocation of polypeptide chains across the membrane. The sequence is that of Protein translocase subunit SecA from Polaromonas sp. (strain JS666 / ATCC BAA-500).